A 299-amino-acid polypeptide reads, in one-letter code: Acetylglutamate kinase (299 aa).

Substrate-binding positions include 70-71 (GG), arginine 92, and asparagine 186.

This sequence belongs to the acetylglutamate kinase family. ArgB subfamily.

The protein resides in the cytoplasm. It catalyses the reaction N-acetyl-L-glutamate + ATP = N-acetyl-L-glutamyl 5-phosphate + ADP. Its pathway is amino-acid biosynthesis; L-arginine biosynthesis; N(2)-acetyl-L-ornithine from L-glutamate: step 2/4. Catalyzes the ATP-dependent phosphorylation of N-acetyl-L-glutamate. The protein is Acetylglutamate kinase of Thermoanaerobacter pseudethanolicus (strain ATCC 33223 / 39E) (Clostridium thermohydrosulfuricum).